The following is a 573-amino-acid chain: E3 ubiquitin-protein ligase RNF168 (573 aa).

The RING-type zinc finger occupies 16 to 55; it reads CQICVEILFEPVTLPCNHTLCKPCFESTVEKASLCCPFCR. S70 is modified (phosphoserine). Residues 110–128 carry the LR motif 1 motif; the sequence is LSKPGELRREYEEEISKVE. The UMI motif motif lies at 143-151; the sequence is EEYIQKLLA. Disordered stretches follow at residues 153–174 and 196–277; these read EEEEEKRQAEKRHREMEEQLKS and ASPL…EDMP. Basic and acidic residues predominate over residues 157 to 174; that stretch reads EKRQAEKRHREMEEQLKS. The short motif at 168 to 191 is the MIU motif 1 element; sequence MEEQLKSDEELARRLSLDINNFCE. Residue S197 is modified to Phosphoserine. Residue K210 forms a Glycyl lysine isopeptide (Lys-Gly) (interchain with G-Cter in SUMO2) linkage. A compositionally biased stretch (polar residues) spans 231–243; it reads PKSQLGSASQSEV. Basic and acidic residues predominate over residues 245–261; sequence QEDRKSSMSKKIDDNSD. T363 carries the phosphothreonine modification. S416 is subject to Phosphoserine. The MIU motif 2 motif lies at 440-463; the sequence is RHKQEKQDRLLALQLQEEVDQEQM. Residues 456-528 are disordered; sequence EEVDQEQMRP…NHQQPSFKIQ (73 aa). The segment covering 461-470 has biased composition (basic and acidic residues); it reads EQMRPDRQKG. The short motif at 467–478 is the LR motif 2 element; it reads RQKGSPDGYQLR. S471 carries the phosphoserine modification. Basic and acidic residues predominate over residues 494–519; it reads NSRDRNSKRQTELEQPKPRTDSKNEN. Residue K530 forms a Glycyl lysine isopeptide (Lys-Gly) (interchain with G-Cter in SUMO2) linkage. Residues 540 to 573 are disordered; the sequence is NSTNDNCNVSKTAHSLQPSKSQKSIFQMFQRVTK.

This sequence belongs to the RNF168 family. In terms of assembly, monomer. Interacts with UBE2N/UBC13. In terms of processing, sumoylated with SUMO1 by PIAS4 in response to double-strand breaks (DSBs). Post-translationally, ubiquitinated.

It is found in the nucleus. It catalyses the reaction S-ubiquitinyl-[E2 ubiquitin-conjugating enzyme]-L-cysteine + [acceptor protein]-L-lysine = [E2 ubiquitin-conjugating enzyme]-L-cysteine + N(6)-ubiquitinyl-[acceptor protein]-L-lysine.. The protein operates within protein modification; protein ubiquitination. In terms of biological role, E3 ubiquitin-protein ligase required for accumulation of repair proteins to sites of DNA damage. Acts with UBE2N/UBC13 to amplify the RNF8-dependent histone ubiquitination. Recruited to sites of DNA damage at double-strand breaks (DSBs) by binding to ubiquitinated histone H2A and H2AX and amplifies the RNF8-dependent H2A ubiquitination, promoting the formation of 'Lys-63'-linked ubiquitin conjugates. This leads to concentrate ubiquitinated histones H2A and H2AX at DNA lesions to the threshold required for recruitment of TP53BP1 and BRCA1. Also recruited at DNA interstrand cross-links (ICLs) sites and promotes accumulation of 'Lys-63'-linked ubiquitination of histones H2A and H2AX, leading to recruitment of FAAP20 and Fanconi anemia (FA) complex, followed by interstrand cross-link repair. H2A ubiquitination also mediates the ATM-dependent transcriptional silencing at regions flanking DSBs in cis, a mechanism to avoid collision between transcription and repair intermediates. Also involved in class switch recombination in immune system, via its role in regulation of DSBs repair. Following DNA damage, promotes the ubiquitination and degradation of JMJD2A/KDM4A in collaboration with RNF8, leading to unmask H4K20me2 mark and promote the recruitment of TP53BP1 at DNA damage sites. Not able to initiate 'Lys-63'-linked ubiquitination in vitro; possibly due to partial occlusion of the UBE2N/UBC13-binding region. Catalyzes monoubiquitination of 'Lys-13' and 'Lys-15' of nucleosomal histone H2A (H2AK13Ub and H2AK15Ub, respectively). This Bos taurus (Bovine) protein is E3 ubiquitin-protein ligase RNF168.